The following is a 286-amino-acid chain: General stress protein A (286 aa).

UDP-binding positions include Cys12–Tyr17 and Asp111–Cys112. Residues Asp111, Asp113, and His247 each coordinate Mn(2+). Position 247 to 253 (His247 to Lys253) interacts with UDP.

It belongs to the glycosyltransferase 8 family.

The polypeptide is General stress protein A (gspA) (Bacillus subtilis (strain 168)).